The following is a 601-amino-acid chain: Glutamyl-tRNA(Gln) amidotransferase subunit B, mitochondrial (601 aa).

The N-terminal 55 residues, 1–55 (MLRPWLRQCPRATRSLACPQCHLPRPQTARRALRPLPALSLSHPIRSLQTTTTES), are a transit peptide targeting the mitochondrion.

Belongs to the GatB/GatE family. GatB subfamily. As to quaternary structure, subunit of the heterotrimeric GatCAB amidotransferase (AdT) complex, composed of A, B and C subunits.

The protein resides in the mitochondrion. It carries out the reaction L-glutamyl-tRNA(Gln) + L-glutamine + ATP + H2O = L-glutaminyl-tRNA(Gln) + L-glutamate + ADP + phosphate + H(+). Its function is as follows. Allows the formation of correctly charged Gln-tRNA(Gln) through the transamidation of misacylated Glu-tRNA(Gln) in the mitochondria. The reaction takes place in the presence of glutamine and ATP through an activated gamma-phospho-Glu-tRNA(Gln). The chain is Glutamyl-tRNA(Gln) amidotransferase subunit B, mitochondrial from Aspergillus niger (strain ATCC MYA-4892 / CBS 513.88 / FGSC A1513).